Reading from the N-terminus, the 270-residue chain is Methylthioribulose-1-phosphate dehydratase (270 aa).

Cysteine 122 contacts substrate. 2 residues coordinate Zn(2+): histidine 140 and histidine 142. Glutamate 165 acts as the Proton donor/acceptor in catalysis. Histidine 230 contacts Zn(2+).

The protein belongs to the aldolase class II family. MtnB subfamily. Zn(2+) serves as cofactor.

Its subcellular location is the cytoplasm. It carries out the reaction 5-(methylsulfanyl)-D-ribulose 1-phosphate = 5-methylsulfanyl-2,3-dioxopentyl phosphate + H2O. It functions in the pathway amino-acid biosynthesis; L-methionine biosynthesis via salvage pathway; L-methionine from S-methyl-5-thio-alpha-D-ribose 1-phosphate: step 2/6. Catalyzes the dehydration of methylthioribulose-1-phosphate (MTRu-1-P) into 2,3-diketo-5-methylthiopentyl-1-phosphate (DK-MTP-1-P). This chain is Methylthioribulose-1-phosphate dehydratase, found in Candida albicans (strain WO-1) (Yeast).